The following is a 348-amino-acid chain: L-threonine 3-dehydrogenase (348 aa).

Cys-42 contacts Zn(2+). Residues Thr-44 and His-47 each act as charge relay system in the active site. Residues His-67, Glu-68, Cys-97, Cys-100, Cys-103, and Cys-111 each coordinate Zn(2+). Residues Leu-179, Glu-199, Arg-204, 266-268 (LGL), and 291-292 (IT) contribute to the NAD(+) site.

This sequence belongs to the zinc-containing alcohol dehydrogenase family. Homodimer. Homotetramer; dimer of dimers. The cofactor is Zn(2+).

The protein resides in the cytoplasm. The enzyme catalyses L-threonine + NAD(+) = (2S)-2-amino-3-oxobutanoate + NADH + H(+). The protein operates within amino-acid degradation; L-threonine degradation via oxydo-reductase pathway; glycine from L-threonine: step 1/2. Its activity is regulated as follows. Is totally inhibited by EDTA in vitro. Functionally, catalyzes the NAD(+)-dependent oxidation of L-threonine to 2-amino-3-ketobutyrate. Is much less efficient when using NADP(+) instead of NAD(+). To a lesser extent, also catalyzes the oxidation of L-serine and DL-threo-3-phenylserine, but not that of L-allo-threonine, D-threonine and D-allo-threonine and many other L-amino acids. This is L-threonine 3-dehydrogenase from Pyrococcus horikoshii (strain ATCC 700860 / DSM 12428 / JCM 9974 / NBRC 100139 / OT-3).